A 168-amino-acid polypeptide reads, in one-letter code: Probable chorismate pyruvate-lyase (168 aa).

Substrate is bound by residues Arg-75, Ile-114, and Glu-155.

The protein belongs to the UbiC family.

It is found in the cytoplasm. It catalyses the reaction chorismate = 4-hydroxybenzoate + pyruvate. The protein operates within cofactor biosynthesis; ubiquinone biosynthesis. In terms of biological role, removes the pyruvyl group from chorismate, with concomitant aromatization of the ring, to provide 4-hydroxybenzoate (4HB) for the ubiquinone pathway. This Psychrobacter arcticus (strain DSM 17307 / VKM B-2377 / 273-4) protein is Probable chorismate pyruvate-lyase.